Consider the following 498-residue polypeptide: ATP synthase subunit beta, chloroplastic (498 aa).

An ATP-binding site is contributed by 172 to 179 (GGAGVGKT).

It belongs to the ATPase alpha/beta chains family. In terms of assembly, F-type ATPases have 2 components, CF(1) - the catalytic core - and CF(0) - the membrane proton channel. CF(1) has five subunits: alpha(3), beta(3), gamma(1), delta(1), epsilon(1). CF(0) has four main subunits: a(1), b(1), b'(1) and c(9-12).

The protein resides in the plastid. It is found in the chloroplast thylakoid membrane. It carries out the reaction ATP + H2O + 4 H(+)(in) = ADP + phosphate + 5 H(+)(out). Produces ATP from ADP in the presence of a proton gradient across the membrane. The catalytic sites are hosted primarily by the beta subunits. The chain is ATP synthase subunit beta, chloroplastic from Asarum canadense (Wild ginger).